The chain runs to 430 residues: Gustatory receptor-like 43a (430 aa).

The Cytoplasmic portion of the chain corresponds to 1-31 (MSTGSHSPEAMWSATNFRRHQRKPNQVLHRW). The chain crosses the membrane as a helical span at residues 32 to 52 (FFKGSAWIIYAIACGLHFFKL). The Extracellular portion of the chain corresponds to 53-79 (HYNERTNQVEESQYHRIWSKIVVVLKV). Residues 80-100 (ILLASPYLQYFVLGLGIYIHI) traverse the membrane as a helical segment. Over 101 to 110 (TLVQDSKAQN) the chain is Cytoplasmic. The helical transmembrane segment at 111–131 (FLMSLIVLGIVIGVLRRLLIF) threads the bilayer. Over 132 to 168 (LHLKRDRRFLKHTVNEILHITSALEQKFGMEYKCDST) the chain is Extracellular. Residues 169-189 (LLVVYLAKLWILTVMLDSLWY) traverse the membrane as a helical segment. The Cytoplasmic portion of the chain corresponds to 190–277 (KPYFLSSIFL…RDNVSWLSTS (88 aa)). A helical membrane pass occupies residues 278-298 (VYLMIFTCIFNAELLIECSLF). Residues 299–306 (AGDELENK) are Extracellular-facing. The chain crosses the membrane as a helical span at residues 307–327 (IYIITDGCLGPVCVPILYVLI). Topologically, residues 328–396 (LGMCTDRFRD…IILDITCDRE (69 aa)) are cytoplasmic. A helical membrane pass occupies residues 397–417 (FVMDYIVTVILTALSLVQYTI). At 418–430 (STGGNISECVTHK) the chain is on the extracellular side. Residue asparagine 422 is glycosylated (N-linked (GlcNAc...) asparagine).

The protein resides in the cell membrane. The polypeptide is Gustatory receptor-like 43a (Drosophila melanogaster (Fruit fly)).